We begin with the raw amino-acid sequence, 105 residues long: Small ribosomal subunit protein eS26 (105 aa).

Belongs to the eukaryotic ribosomal protein eS26 family. Component of the small ribosomal subunit.

The protein resides in the cytoplasm. This chain is Small ribosomal subunit protein eS26 (RPS26), found in Encephalitozoon cuniculi (strain GB-M1) (Microsporidian parasite).